Consider the following 295-residue polypeptide: Oxidoreductase AN1597 (295 aa).

The protein belongs to the asaB hydroxylase/desaturase family.

It functions in the pathway secondary metabolite biosynthesis; terpenoid biosynthesis. Its function is as follows. Oxidoreductase; part of the gene cluster that mediates the biosynthesis of the diterpene ent-pimara-8(14),15-diene (PD). Within the cluster, the HMG-CoA reductase AN1593 functions in the mevalonate pathway, which produces isoprenoid precursors. The geranylgeranyl pyrophosphate (GGPP) synthase AN1592 is needed in the formation of GGPP, the precursor for diterpenes. Lastly, the pimaradiene synthase pbcA performs the 2 cyclization steps that convert GGPP to ent-pimara-8(14),15-diene. The putative roles of the remaining cluster enzymes in ent-pimara-8(14),15-diene biosynthesis is unclear. The cytochrome P450 monooxygenase AN1598, the glutathione S-transferase AN1595, the oxidoreductases AN1596 and AN1597 probably function as decorative enzymes. It is possible that in biological conditions the compound is oxidized to ent-pimara-8(14),15-dien-19-oic acid, which is a bioactive diterpene compound predominant in many plant extracts. The sequence is that of Oxidoreductase AN1597 from Emericella nidulans (strain FGSC A4 / ATCC 38163 / CBS 112.46 / NRRL 194 / M139) (Aspergillus nidulans).